A 225-amino-acid polypeptide reads, in one-letter code: MVSHSELRKLFYSADAVCFDVDSTVIREEGIDELAKICGVEDAVSEMTRRAMGGAVPFKAALTERLALIQPSREQVQRLIAEQPPHLTPGIRELVSRLQERNVQVFLISGGFRSIVEHVASKLNIPATNVFANRLKFYFNGEYAGFDETQPTAESGGKGKVIKLLKEKFHFKKIIMIGDGATDMEACPPADAFIGFGGNVIRQQVKDNAKWYITDFVELLGELEE.

The residue at position 1 (Met-1) is an N-acetylmethionine. Asp-20 (nucleophile) is an active-site residue. Positions 20 and 22 each coordinate Mg(2+). Residue 20–22 (DVD) coordinates L-serine. The active-site Proton donor is Asp-22. Met-52 contacts O-phospho-L-serine. Phosphate is bound at residue Gly-53. Residues 109-111 (SGG) and Lys-158 each bind L-serine. O-phospho-L-serine is bound by residues 109–111 (SGG) and Lys-158. Mg(2+) is bound at residue Asp-179. Thr-182 serves as a coordination point for O-phospho-L-serine. Residue Thr-182 participates in phosphate binding.

This sequence belongs to the HAD-like hydrolase superfamily. SerB family. In terms of assembly, homodimer. Requires Mg(2+) as cofactor.

The protein localises to the cytoplasm. The protein resides in the cytosol. The catalysed reaction is O-phospho-L-serine + H2O = L-serine + phosphate. It carries out the reaction O-phospho-D-serine + H2O = D-serine + phosphate. The protein operates within amino-acid biosynthesis; L-serine biosynthesis; L-serine from 3-phospho-D-glycerate: step 3/3. With respect to regulation, inhibited by calcium ions. Catalyzes the last irreversible step in the biosynthesis of L-serine from carbohydrates, the dephosphorylation of O-phospho-L-serine to L-serine. L-serine can then be used in protein synthesis, to produce other amino acids, in nucleotide metabolism or in glutathione synthesis, or can be racemized to D-serine, a neuromodulator. May also act on O-phospho-D-serine. The polypeptide is Phosphoserine phosphatase (Homo sapiens (Human)).